The following is a 438-amino-acid chain: 3-phosphoshikimate 1-carboxyvinyltransferase (438 aa).

The 3-phosphoshikimate site is built by K21, S22, and R26. A phosphoenolpyruvate-binding site is contributed by K21. Phosphoenolpyruvate is bound by residues G93 and R121. Residues S166, S167, Q168, S194, D324, and K351 each coordinate 3-phosphoshikimate. Q168 lines the phosphoenolpyruvate pocket. The active-site Proton acceptor is D324. The phosphoenolpyruvate site is built by R355 and R395.

Belongs to the EPSP synthase family. Monomer.

It is found in the cytoplasm. It catalyses the reaction 3-phosphoshikimate + phosphoenolpyruvate = 5-O-(1-carboxyvinyl)-3-phosphoshikimate + phosphate. It functions in the pathway metabolic intermediate biosynthesis; chorismate biosynthesis. Catalyzes the transfer of the enolpyruvyl moiety of phosphoenolpyruvate (PEP) to the 5-hydroxyl of shikimate-3-phosphate (S3P) to produce enolpyruvyl shikimate-3-phosphate and inorganic phosphate. The sequence is that of 3-phosphoshikimate 1-carboxyvinyltransferase from Methanobrevibacter smithii (strain ATCC 35061 / DSM 861 / OCM 144 / PS).